A 459-amino-acid chain; its full sequence is Inositol-trisphosphate 3-kinase A (459 aa).

A disordered region spans residues 1 to 29 (MTLPGRPTGMARPRGAGPCSPGLERAPRR). Omega-N-methylarginine occurs at positions 35, 55, and 62. Residues 49 to 164 (AAAGEPRARG…TSEDVGQKSH (116 aa)) are disordered. Residues 116 to 132 (RRLSTSSLSSTGSSSLL) are compositionally biased toward low complexity. Residues serine 135 and serine 195 each carry the phosphoserine modification. Residues serine 195, lysine 207, 247–249 (QDL), and aspartate 260 each bind ATP. Substrate-binding residues include lysine 262 and arginine 283. Positions 285 to 293 (DMYKKMLAV) are calmodulin-binding. 310 to 317 (KPRYMQWR) serves as a coordination point for substrate. Positions 334 and 414 each coordinate ATP. Lysine 417 contributes to the substrate binding site.

It belongs to the inositol phosphokinase (IPK) family.

The protein resides in the cytoplasm. Its subcellular location is the cytoskeleton. It catalyses the reaction 1D-myo-inositol 1,4,5-trisphosphate + ATP = 1D-myo-inositol 1,3,4,5-tetrakisphosphate + ADP + H(+). Its activity is regulated as follows. Activated by calcium/calmodulin. Its function is as follows. Catalyzes the phosphorylation of 1D-myo-inositol 1,4,5-trisphosphate (InsP3) into 1D-myo-inositol 1,3,4,5-tetrakisphosphate and participates to the regulation of calcium homeostasis. This Mus musculus (Mouse) protein is Inositol-trisphosphate 3-kinase A.